A 254-amino-acid polypeptide reads, in one-letter code: 5'-nucleotidase SurE (254 aa).

Positions 8, 9, 39, and 97 each coordinate a divalent metal cation.

The protein belongs to the SurE nucleotidase family. A divalent metal cation serves as cofactor.

It localises to the cytoplasm. The catalysed reaction is a ribonucleoside 5'-phosphate + H2O = a ribonucleoside + phosphate. In terms of biological role, nucleotidase that shows phosphatase activity on nucleoside 5'-monophosphates. The chain is 5'-nucleotidase SurE from Alkaliphilus metalliredigens (strain QYMF).